The primary structure comprises 92 residues: DNA-binding protein HU 1 (92 aa).

Thr4 carries the post-translational modification Phosphothreonine.

The protein belongs to the bacterial histone-like protein family. In terms of assembly, homodimer. As to quaternary structure, (Microbial infection) Interacts with Bacillus phage SP01 Gp46; the interaction replaces dsDNA from the hbs-DNA complex.

It localises to the cytoplasm. Its subcellular location is the nucleoid. In terms of biological role, histone-like DNA-binding protein which introduces negative supercoils in relaxed plasmid DNA in the presence of topoisomerase I. There are at least 20,000 monomers/cell. Capable of wrapping DNA to stabilize it, and thus to prevent its denaturation under extreme environmental conditions. Binds evenly across chromosome, does not display a preference for AT content. Binds ss- and dsDNA in a sequence non-specific manner; 8 nucleotides are sufficient to bind protein. The polypeptide is DNA-binding protein HU 1 (Bacillus subtilis (strain 168)).